The sequence spans 540 residues: MVNTILVPVAVAIVSVLVGGCAGYSIRKNKWETQAQNAAHDAKHILADAESKAKAVEADLASQKEAMKKAAADAKKEKILEAQEEIHHYRERVDNELNERRQEVSRQENRLLQREDAIDHKDSLLDQKDSQLTQKENQIKKLQAQVLEKENRADQLVTEREKKLYEVAELNQEDAKKIVLDKLSDQLVKERAEMIEESNQLAKAKADHFARKVIVDAIQSSAADTVSEKTVSVVNLPSDDMKGRIIGREGRNIRSFEALTGVDVIIDDTPDVVVLSGFDPIRREIAKRALERLIKDGRIHPARIEEMVDRARKEVNDDIYEAGESALMELGIHKMHPELVKILGRLKYRTSYGQNVLSHSIEVGKLTGVMAAELGLDEKIAVRAGLLHDIGKSIDHEIEGSHVEIGVELARKYHEPDLVVNAIAAHHDDVPKLSFIAELVVAADTISSARPGARSESLENYIRRLEQLETIAKGHIGVKQAYAIQAGREIRVMVEPDKISDARTTILAHDIRNQIEQDMEYPGNIKVTVIREKRAVAIAK.

The chain crosses the membrane as a helical span at residues 4–24; sequence TILVPVAVAIVSVLVGGCAGY. The 64-residue stretch at 230 to 293 folds into the KH domain; it reads TVSVVNLPSD…EIAKRALERL (64 aa). The 94-residue stretch at 356–449 folds into the HD domain; it reads VLSHSIEVGK…VVAADTISSA (94 aa).

This sequence belongs to the RNase Y family.

Its subcellular location is the cell membrane. Functionally, endoribonuclease that initiates mRNA decay. The chain is Ribonuclease Y from Lactobacillus johnsonii (strain CNCM I-12250 / La1 / NCC 533).